Here is a 1738-residue protein sequence, read N- to C-terminus: Sodium leak channel NALCN (1738 aa).

Residues 1 to 36 (MLKRKQSSRVEAQPVTDFGPDESLSDNADILWINKP) are Cytoplasmic-facing. A helical transmembrane segment spans residues 37 to 57 (WVHSLLRICAIISVISVCMNT). The Extracellular segment spans residues 58–65 (PMTFEHYP). Residues 66-90 (PLQYVTFTLDTLLMFLYTAEMIAKM) form a helical membrane-spanning segment. Residues 91 to 106 (HIRGIVKGDSSYVKDR) lie on the Cytoplasmic side of the membrane. The helical transmembrane segment at 107–129 (WCVFDGFMVFCLWVSLVLQVFEI) threads the bilayer. At 130–137 (ADIVDQMS) the chain is on the extracellular side. A helical; Voltage-sensor transmembrane segment spans residues 138–158 (PWGMLRIPRPLIMIRAFRIYF). Residues 159-173 (RFELPRTRITNILKR) lie on the Cytoplasmic side of the membrane. Residues 174-199 (SGEQIWSVSIFLLFFLLLYGILGVQM) traverse the membrane as a helical segment. At 200 to 269 (FGTFTYHCVV…YSGFNEIGTS (70 aa)) the chain is on the extracellular side. 2 cysteine pairs are disulfide-bonded: Cys-207–Cys-239 and Cys-229–Cys-245. 2 N-linked (GlcNAc...) asparagine glycosylation sites follow: Asn-210 and Asn-216. An intramembrane region (pore-forming) is located at residues 270–289 (IFTVYEASSQEGWVFLMYRA). The Extracellular portion of the chain corresponds to 290–294 (IDSFP). The chain crosses the membrane as a helical span at residues 295 to 322 (RWRSYFYFITLIFFLAWLVKNVFIAVII). The Cytoplasmic portion of the chain corresponds to 323–382 (ETFAEIRVQFQQMWGTRSSTTSTATTQMFHEDAAGGWQLVAVDVNKPQGRAPACLQKMMR). The helical transmembrane segment at 383–403 (SSVFHMFILSMVTVDVIVAAS) threads the bilayer. Residues 404–416 (NYYKGENFRRQYD) are Extracellular-facing. A helical membrane pass occupies residues 417-439 (EFYLAEVAFTVLFDLEALLKIWC). At 440–447 (LGFTGYIS) the chain is on the cytoplasmic side. A helical transmembrane segment spans residues 448-468 (SSLHKFELLLVIGTTLHVYPD). Residues 469–472 (LYHS) are Extracellular-facing. The helical; Voltage-sensor transmembrane segment at 473–492 (QFTYFQVLRVVRLIKISPAL) threads the bilayer. At 493–502 (EDFVYKIFGP) the chain is on the cytoplasmic side. The chain crosses the membrane as a helical span at residues 503–530 (GKKLGSLVVFTASLLIVMSAISLQMFCF). Over 531 to 543 (VEELDRFTTFPRA) the chain is Extracellular. The segment at residues 544-563 (FMSMFQILTQEGWVDVMDQT) is an intramembrane region (pore-forming). The Extracellular portion of the chain corresponds to 564 to 578 (LNAVGHMWAPLVAIY). Residues 579–599 (FILYHLFATLILLSLFVAVIL) form a helical membrane-spanning segment. Topologically, residues 600–886 (DNLELDEDLK…QLYDLLGLVT (287 aa)) are cytoplasmic. Residues 762-785 (QERRSLRHGSNSQRISRGKSLETL) form a disordered region. Positions 795 to 830 (YRNAQREDSEIKMIQEKKEQAEMKRKVQEEELRENH) form a coiled coil. Residues 887-906 (YLDWVMITVTICSCISMMFE) traverse the membrane as a helical segment. The Extracellular segment spans residues 907–915 (SPFRRVMHA). Residues 916-939 (PTLQIAEYVFVIFMSIELNLKIMA) form a helical membrane-spanning segment. At 940-947 (DGLFFTPT) the chain is on the cytoplasmic side. The chain crosses the membrane as a helical span at residues 948–972 (AVIRDFGGVMDIFIYLVSLIFLCWM). Residues 973-980 (PQNVPAES) lie on the Extracellular side of the membrane. The chain crosses the membrane as a helical; Voltage-sensor span at residues 981 to 1003 (GAQLLMVLRCLRPLRIFKLVPQM). Residues 1004–1015 (RKVVRELFSGFK) are Cytoplasmic-facing. The chain crosses the membrane as a helical span at residues 1016–1039 (EIFLVSILLLTLMLVFASFGVQLF). Over 1040–1104 (AGKLAKCNDP…NFNFDNVGNA (65 aa)) the chain is Extracellular. A disulfide bond links Cys-1046 and Cys-1057. Asn-1064 carries N-linked (GlcNAc...) asparagine glycosylation. The pore-forming intramembrane region spans 1105–1124 (MLALFEVLSLKGWVEVRDVI). Over 1125-1129 (IHRVG) the chain is Extracellular. Residues 1130-1159 (PIHGIYIHVFVFLGCMIGLTLFVGVVIANF) traverse the membrane as a helical segment. Over 1160 to 1210 (NENKGTALLTVDQRRWEDLKSRLKIAQPLHLPPRPDNDGFRAKMYDITQHP) the chain is Cytoplasmic. Residues 1211–1227 (FFKRTIALLVLAQSVLL) form a helical membrane-spanning segment. The Extracellular segment spans residues 1228 to 1236 (SVKWDVDDP). A helical transmembrane segment spans residues 1237-1260 (VTVPLATMSVVFTFIFVLEVTMKI). Residues 1261-1271 (IAMSPAGFWQS) are Cytoplasmic-facing. A helical transmembrane segment spans residues 1272–1293 (RRNRYDLLVTSLGVVWVVLHFA). Residues 1294 to 1296 (LLN) lie on the Extracellular side of the membrane. Residues 1297–1318 (AYTYMMGACVIVFRFFSICGKH) traverse the membrane as a helical; Voltage-sensor segment. Over 1319–1331 (VTLKMLLLTVVVS) the chain is Cytoplasmic. The chain crosses the membrane as a helical span at residues 1332–1357 (MYKSFFIIVGMFLLLLCYAFAGVVLF). Residues 1358–1378 (GTVKYGENINRHANFSSAGKA) lie on the Extracellular side of the membrane. The segment at residues 1379–1398 (ITVLFRIVTGEDWNKIMHDC) is an intramembrane region (pore-forming). Residues 1399-1420 (MVQPPFCTPDEFTYWATDCGNY) lie on the Extracellular side of the membrane. Cys-1405 and Cys-1417 are oxidised to a cystine. A helical transmembrane segment spans residues 1421-1447 (AGALMYFCSFYVIIAYIMLNLLVAIIV). Residues 1448-1738 (ENFSLFYSTE…DESGDDLLDI (291 aa)) are Cytoplasmic-facing. The disordered stretch occupies residues 1602 to 1679 (EQERSRFLNP…WRLPSAPKPI (78 aa)). Residues 1613-1631 (SIETTQPSEDSNANSQDHS) are compositionally biased toward polar residues. A compositionally biased stretch (low complexity) spans 1633-1648 (QPETSSQQQLLSPTLS).

It belongs to the NALCN family. In terms of assembly, found in a complex with NALCN, UNC79, UNC80 and NACL1; these auxiliary subunits are indispensable for the function of the NALCN channel. Interacts with UNC80; required for the NALCN activation/inhibition by GPCRs in neurons. Found in a complex with NALCN, UNC79 and UNC80; UNC80 bridges NALCN to UNC79. Interacts with CHRM3. Phosphorylated on tyrosine residues. In terms of tissue distribution, widely expressed in the brain and spinal cord neurons. Expressed also in pancreatic islet cells.

It is found in the cell membrane. It carries out the reaction Na(+)(in) = Na(+)(out). Its activity is regulated as follows. Inhibited by low micromolar concentrations of Gd(3+) and high micromolar concentrations of verapamil. Insensitive to tetrodotoxin (TTX) and potentiated by low external Ca(2+) concentration. Voltage-gated ion channel responsible for the resting Na(+) permeability that controls neuronal excitability. NALCN channel functions as a multi-protein complex, which consists at least of NALCN, NALF1, UNC79 and UNC80. NALCN is the voltage-sensing, pore-forming subunit of the NALCN channel complex. NALCN channel complex is constitutively active and conducts monovalent cations but is blocked by physiological concentrations of extracellular divalent cations. In addition to its role in regulating neuronal excitability, is required for normal respiratory rhythm, systemic osmoregulation by controlling the serum sodium concentration and in the regulation of the intestinal pace-making activity in the interstitial cells of Cajal. Plays a critical role in both maintenance of spontaneous firing of substantia nigra pars reticulata (SNr) neurons and physiological modulation of SNr neuron excitability. NALCN channel is also activated by neuropeptides such as neurotensin and substance P (SP) through a SRC family kinases-dependent pathway. In addition, NALCN activity is enhanced/modulated by several GPCRs, such as CHRM3. The chain is Sodium leak channel NALCN (Nalcn) from Mus musculus (Mouse).